We begin with the raw amino-acid sequence, 80 residues long: Serine protease inhibitor Kazal-type 6 (80 aa).

Residues Met1–Gly23 form the signal peptide. Pyrrolidone carboxylic acid is present on Gln24. The region spanning Gln24 to Cys80 is the Kazal-like domain. 3 disulfide bridges follow: Cys30–Cys62, Cys40–Cys59, and Cys48–Cys80.

Seminal plasma.

Its subcellular location is the secreted. Its function is as follows. Serine protease inhibitor selective for kallikreins. Efficiently inhibits KLK4, KLK5, KLK6, KLK7, KLK12, KLK13 and KLK14. Doesn't inhibit KLK8. Inhibits acrosin, trypsin, and chymotrypsin. The chain is Serine protease inhibitor Kazal-type 6 (SPINK6) from Bos taurus (Bovine).